A 680-amino-acid chain; its full sequence is Probable inactive DNA (cytosine-5)-methyltransferase DRM3 (680 aa).

The segment at 1–24 (MVKVEDDVEGSGINASVGDLRDAA) is disordered. A UBA 1 domain is found at 45 to 86 (SSSSHVRSQFIGMGFSPMLVDRVLQKHGDRDSDTILEALLSQ). Residues 91–113 (KSGSESGSLGDLFDSDNEENSSH) are disordered. The region spanning 194-235 (SLFGVMDKTLHLLQMGFTEEEVSSVIDKAGPEATVLELADTI) is the UBA 2 domain. One can recognise an SAM-dependent MTase DRM-type domain in the interval 336–663 (IRRNVRSDVA…QRVKHIMGRL (328 aa)).

The protein belongs to the class I-like SAM-binding methyltransferase superfamily. DRM-methyltransferase family.

It localises to the nucleus. Its function is as follows. Involved in de novo DNA methylation. Involved in RNA-directed DNA methylation (RdDM). The sequence is that of Probable inactive DNA (cytosine-5)-methyltransferase DRM3 from Oryza sativa subsp. japonica (Rice).